Consider the following 102-residue polypeptide: MNKAILHTIIIYTLASCPYCIKAKALLDEKNVVYEEIEVSNFTQEEKEKFIKKSGGKKTVPQIFIDNIHVGGCDALFDLEKEGRLDKLLEGQPKKKMPAAGA.

The Glutaredoxin domain occupies 1–96; the sequence is MNKAILHTII…KLLEGQPKKK (96 aa). A disulfide bond links Cys17 and Cys20.

The protein belongs to the glutaredoxin family. Monomer.

The protein localises to the cytoplasm. Functionally, has a glutathione-disulfide oxidoreductase activity in the presence of NADPH and glutathione reductase. Reduces low molecular weight disulfides and proteins. This Rickettsia felis (strain ATCC VR-1525 / URRWXCal2) (Rickettsia azadi) protein is Glutaredoxin 1 (grxC1).